Consider the following 347-residue polypeptide: NADH-ubiquinone oxidoreductase chain 2 (347 aa).

Transmembrane regions (helical) follow at residues 1 to 21 (MTPM…TLTL), 26 to 46 (WLLM…LLTY), 56 to 76 (AIKY…AASL), 96 to 116 (GIMT…YWVP), 153 to 171 (ILLT…NGLN), 178 to 198 (VMAY…IYFP), 199 to 219 (TLTT…FTVF), 237 to 257 (APIM…LPPL), 277 to 297 (IMAT…MRII), and 326 to 346 (LPTL…FITL).

Belongs to the complex I subunit 2 family. As to quaternary structure, core subunit of respiratory chain NADH dehydrogenase (Complex I) which is composed of 45 different subunits. Interacts with TMEM242.

Its subcellular location is the mitochondrion inner membrane. The enzyme catalyses a ubiquinone + NADH + 5 H(+)(in) = a ubiquinol + NAD(+) + 4 H(+)(out). Functionally, core subunit of the mitochondrial membrane respiratory chain NADH dehydrogenase (Complex I) which catalyzes electron transfer from NADH through the respiratory chain, using ubiquinone as an electron acceptor. Essential for the catalytic activity and assembly of complex I. This is NADH-ubiquinone oxidoreductase chain 2 from Ornithorhynchus anatinus (Duckbill platypus).